A 119-amino-acid chain; its full sequence is Large ribosomal subunit protein uL18 (119 aa).

This sequence belongs to the universal ribosomal protein uL18 family. In terms of assembly, part of the 50S ribosomal subunit; part of the 5S rRNA/L5/L18/L25 subcomplex. Contacts the 5S and 23S rRNAs.

Its function is as follows. This is one of the proteins that bind and probably mediate the attachment of the 5S RNA into the large ribosomal subunit, where it forms part of the central protuberance. The sequence is that of Large ribosomal subunit protein uL18 from Legionella pneumophila (strain Paris).